The following is a 1072-amino-acid chain: DNA-directed RNA polymerase subunit beta (1072 aa).

Belongs to the RNA polymerase beta chain family. In terms of assembly, in plastids the minimal PEP RNA polymerase catalytic core is composed of four subunits: alpha, beta, beta', and beta''. When a (nuclear-encoded) sigma factor is associated with the core the holoenzyme is formed, which can initiate transcription.

The protein localises to the plastid. It is found in the chloroplast. The catalysed reaction is RNA(n) + a ribonucleoside 5'-triphosphate = RNA(n+1) + diphosphate. In terms of biological role, DNA-dependent RNA polymerase catalyzes the transcription of DNA into RNA using the four ribonucleoside triphosphates as substrates. In Draba nemorosa (Woodland whitlowgrass), this protein is DNA-directed RNA polymerase subunit beta.